The following is a 569-amino-acid chain: Membrane protein insertase YidC (569 aa).

The chain crosses the membrane as a helical span at residues 6–26 (FVLFLIFATSLLFLWDAWQKE). Polar residues-rich tracts occupy residues 32–52 (QGPK…TAGT) and 62–74 (LASS…STAE). Residues 32-81 (QGPKTAVQGTETQANTGTAGTAETPVPGDQLASSVPQRGSTAENGAPVRA) are disordered. The next 5 membrane-spanning stretches (helical) occupy residues 348-368 (VVDY…LSLF), 375-395 (WGVA…PLSA), 442-462 (GGCL…WVLL), 479-499 (LSAP…MFLQ), and 519-539 (PLAF…YSLV).

Belongs to the OXA1/ALB3/YidC family. Type 1 subfamily. Interacts with the Sec translocase complex via SecD. Specifically interacts with transmembrane segments of nascent integral membrane proteins during membrane integration.

It is found in the cell inner membrane. Functionally, required for the insertion and/or proper folding and/or complex formation of integral membrane proteins into the membrane. Involved in integration of membrane proteins that insert both dependently and independently of the Sec translocase complex, as well as at least some lipoproteins. Aids folding of multispanning membrane proteins. The sequence is that of Membrane protein insertase YidC from Nitrosospira multiformis (strain ATCC 25196 / NCIMB 11849 / C 71).